A 353-amino-acid polypeptide reads, in one-letter code: Photosystem II protein D1 (353 aa).

The residue at position 2 (Thr2) is an N-acetylthreonine. At Thr2 the chain carries Phosphothreonine. Helical transmembrane passes span 29–46, 118–133, and 142–156; these read YIGW…TATS, HFLL…EWEL, and WIAV…AATA. Residue His118 participates in chlorophyll a binding. Residue Tyr126 coordinates pheophytin a. Asp170 and Glu189 together coordinate [CaMn4O5] cluster. A helical transmembrane segment spans residues 197–218; it reads FHMLGVAGVFGGSLFSAMHGSL. His198 lines the chlorophyll a pocket. Residues His215 and 264–265 each bind a quinone; that span reads SF. His215 contacts Fe cation. A Fe cation-binding site is contributed by His272. The helical transmembrane segment at 274 to 288 threads the bilayer; it reads FLAAWPVVGIWFTAL. His332, Glu333, Asp342, and Ala344 together coordinate [CaMn4O5] cluster. Positions 345–353 are excised as a propeptide; the sequence is SVEAPSTNG.

The protein belongs to the reaction center PufL/M/PsbA/D family. As to quaternary structure, PSII is composed of 1 copy each of membrane proteins PsbA, PsbB, PsbC, PsbD, PsbE, PsbF, PsbH, PsbI, PsbJ, PsbK, PsbL, PsbM, PsbT, PsbX, PsbY, PsbZ, Psb30/Ycf12, at least 3 peripheral proteins of the oxygen-evolving complex and a large number of cofactors. It forms dimeric complexes. The cofactor is The D1/D2 heterodimer binds P680, chlorophylls that are the primary electron donor of PSII, and subsequent electron acceptors. It shares a non-heme iron and each subunit binds pheophytin, quinone, additional chlorophylls, carotenoids and lipids. D1 provides most of the ligands for the Mn4-Ca-O5 cluster of the oxygen-evolving complex (OEC). There is also a Cl(-1) ion associated with D1 and D2, which is required for oxygen evolution. The PSII complex binds additional chlorophylls, carotenoids and specific lipids.. In terms of processing, tyr-161 forms a radical intermediate that is referred to as redox-active TyrZ, YZ or Y-Z. Post-translationally, C-terminally processed by CTPA; processing is essential to allow assembly of the oxygen-evolving complex and thus photosynthetic growth.

Its subcellular location is the plastid. The protein resides in the chloroplast thylakoid membrane. The enzyme catalyses 2 a plastoquinone + 4 hnu + 2 H2O = 2 a plastoquinol + O2. In terms of biological role, photosystem II (PSII) is a light-driven water:plastoquinone oxidoreductase that uses light energy to abstract electrons from H(2)O, generating O(2) and a proton gradient subsequently used for ATP formation. It consists of a core antenna complex that captures photons, and an electron transfer chain that converts photonic excitation into a charge separation. The D1/D2 (PsbA/PsbD) reaction center heterodimer binds P680, the primary electron donor of PSII as well as several subsequent electron acceptors. This Acorus calamus (Sweet flag) protein is Photosystem II protein D1.